Reading from the N-terminus, the 1391-residue chain is DNA-directed RNA polymerase subunit beta' (1391 aa).

Cys-72, Cys-74, Cys-87, and Cys-90 together coordinate Zn(2+). Residues Asp-462, Asp-464, and Asp-466 each contribute to the Mg(2+) site. Residues Cys-816, Cys-890, Cys-897, and Cys-900 each coordinate Zn(2+).

This sequence belongs to the RNA polymerase beta' chain family. The RNAP catalytic core consists of 2 alpha, 1 beta, 1 beta' and 1 omega subunit. When a sigma factor is associated with the core the holoenzyme is formed, which can initiate transcription. Requires Mg(2+) as cofactor. The cofactor is Zn(2+).

The catalysed reaction is RNA(n) + a ribonucleoside 5'-triphosphate = RNA(n+1) + diphosphate. DNA-dependent RNA polymerase catalyzes the transcription of DNA into RNA using the four ribonucleoside triphosphates as substrates. The protein is DNA-directed RNA polymerase subunit beta' of Neisseria gonorrhoeae (strain NCCP11945).